The primary structure comprises 948 residues: ATPase 2, plasma membrane-type (948 aa).

Position 2 is an N-acetylserine (Ser2). The Cytoplasmic portion of the chain corresponds to 2–61 (SSLEDIKNETVDLEKIPIEEVFQQLKCSREGLTTQEGEDRIQIFGPNKLEEKKESKLLKF). The helical transmembrane segment at 62 to 81 (LGFMWNPLSWVMEMAAIMAI) threads the bilayer. Topologically, residues 82–93 (ALANGDGRPPDW) are extracellular. The helical transmembrane segment at 94 to 114 (QDFVGIICLLVINSTISFIEE) threads the bilayer. At 115-243 (NNAGNAAAAL…GHFQKVLTAI (129 aa)) the chain is on the cytoplasmic side. A helical membrane pass occupies residues 244–264 (GNFCICSIAIGMVIEIIVMYP). Over 265–273 (IQRRKYRDG) the chain is Extracellular. Residues 274–291 (IDNLLVLLIGGIPIAMPT) form a helical membrane-spanning segment. Residues 292 to 643 (VLSVTMAIGS…TSRAIFQRMK (352 aa)) lie on the Cytoplasmic side of the membrane. Asp329 acts as the 4-aspartylphosphate intermediate in catalysis. Residues Asp588 and Asp592 each contribute to the Mg(2+) site. Residues 644–665 (NYTIYAVSITIRIVFGFMLIAL) form a helical membrane-spanning segment. Topologically, residues 666–670 (IWEFD) are extracellular. A helical transmembrane segment spans residues 671–693 (FSAFMVLIIAILNDGTIMTISKD). Topologically, residues 694-709 (RVKPSPTPDSWKLKEI) are cytoplasmic. The helical transmembrane segment at 710-730 (FATGVVLGGYQAIMTVIFFWA) threads the bilayer. Over 731 to 751 (AHKTDFFSDTFGVRSIRDNNH) the chain is Extracellular. Residues 752 to 772 (ELMGAVYLQVSIISQALIFVT) traverse the membrane as a helical segment. The Cytoplasmic portion of the chain corresponds to 773 to 784 (RSRSWSFVERPG). Residues 785 to 805 (ALLMIAFLIAQLIATLIAVYA) traverse the membrane as a helical segment. Over 806–813 (NWEFAKIR) the chain is Extracellular. The helical transmembrane segment at 814 to 834 (GIGWGWAGVIWLYSIVTYFPL) threads the bilayer. Over 835-948 (DVFKFAIRYI…DIETPSHYTV (114 aa)) the chain is Cytoplasmic. Phosphothreonine is present on Thr881. Position 899 is a phosphoserine (Ser899). Ser931 carries the post-translational modification Phosphoserine; by CIPK11. The tract at residues 946–948 (YTV) is interaction with 14-3-3 proteins. Thr947 bears the Phosphothreonine mark.

Belongs to the cation transport ATPase (P-type) (TC 3.A.3) family. Type IIIA subfamily. Binds to 14-3-3 proteins. The binding is induced by phosphorylation of Thr-947 and it activates the H(+)-ATPase. Interacts (via the R-domain) with PSY1R (via C-terminus). Part of a functional complex containing PSKR1, BAK1, CNGC17, and AHA. Interacts with CNGC17 and PSKR1. Interacts with PP2C67/PP2C-D1 at the plasma membrane. Interacts with AHA1. Phosphorylated, probably by PHOT1 and PHOT2, at C-terminal Thr-947 in guard cells in response to blue light to induce stomatal opening. Post-translationally, phosphorylation at Thr-881 by PSY1R. This phosphorylation activates proton pumping. Decreased phosphorylation in response to flg22 elicitation. In terms of processing, phosphorylation at Ser-899 is specifically induced by RALF1, thus leading to the inhibition of proton transport. Increased phosphorylation in response to flg22 elicitation. Phosphorylation of Thr-947 induces the binding to 14-3-3 proteins, but phosphorylation of Ser-931 interferes with this binding no matter whether Thr-947 is phosphorylated or not. Decreased phosphorylation in response to flg22 elicitation. Phosphorylation of Thr-947 is enhanced by the presence of brassinolide (BL) via the BRI1-BIN2 pathway and prior the trigger of hypocotyl elongation. Inactivated by PP2C67/PP2C-D1-mediated Thr-947 dephosphorylation; SAUR19 inhibits the action of PP2C67/PP2C-D1 and thus promotes the active phosphorylated form. Post-translationally, abscisic acid induces dephosphorylation of AHA2 in etiolated seedlings, suppressing ATP hydrolysis and hypocotyl elongation. As to expression, higher levels in roots than in shoots. Expressed in epidermal and root cortex cells, in phloem, xylem and root hairs. Detected in cotyledons, leaves, hypocotyls, roots and root hairs. Expressed in guard cells and mesophyll cells.

The protein resides in the cell membrane. The enzyme catalyses ATP + H2O + H(+)(in) = ADP + phosphate + 2 H(+)(out). Its activity is regulated as follows. Regulated by an auto-inhibitory C-terminal domain that can be displaced by phosphorylation of Thr-947 and the subsequent binding of 14-3-3 proteins. Negatively regulated by PKS5. PKS5 phosphorylates Ser-931, inhibiting interaction with the activating 14-3-3 protein. Positively regulated by PSY1R. PSY1R phosphorylates Thr-881, situated in the auto-inhibitory region I of the C-terminal domain, causing pump activation. Negatively regulated by the secreted peptide RALF. After specific binding to FERONIA, RALF causes phosphorylation at Ser-899, mediating the inhibition of proton transport. Activated by lysophospholipids, without the involvement of phosphorylation of Thr-947. This activation is critically dependent on the single autoinhibitory residue Leu-919. Repressed by PP2C-D phosphatases (e.g. PP2C67/PP2C-D1 and PP2C64/PP2C-D5) which dephosphorylates Thr-947. Triggered by SAUR19 via phosphorylation of the C-terminal autoinhibitory domain (e.g. Thr-947), as a result of the inhibition of PP2C67/PP2C-D1. Phosphorylation on Thr residues is repressed by tyrphostin 9, sphingosine, GW5074 and BML-265. By contrast, the fungal phytotoxin fusicoccin (FC) promotes phosphorylation of Thr-947 independently to BHP, thus leading to large stomatal opening. Functionally, the plasma membrane H(+) ATPase of plants and fungi generates a proton gradient that drives the active transport of nutrients by H(+)-symport. The resulting external acidification and/or internal alkinization may mediate growth responses. Involved in maintaining the membrane potential and delta-pH, together forming the plasma membrane protonmotive force (PMF) required for root and hypocotyl elongation and root tropism. Important for root growth and development during different nitrogen regimes. Forms a functional cation-translocating unit with CNGC17 that is activated by PSKR1/BAK1 and possibly other BAK1/RLK complexes. Promotes stomatal opening in response to blue light. This Arabidopsis thaliana (Mouse-ear cress) protein is ATPase 2, plasma membrane-type.